A 581-amino-acid polypeptide reads, in one-letter code: Tetratricopeptide repeat and J domain-containing co-chaperone DNJ1 (581 aa).

The N-terminal stretch at 1–19 (MKATLLPSLLALSLTLCLA) is a signal peptide. TPR repeat units follow at residues 48–81 (ASQH…DPSS), 82–115 (WLTY…NPKF), 116–149 (DKAY…RAEK), 221–254 (LETR…TPSP), 257–293 (LRRL…DPDN), 378–411 (LELH…DPDN), and 412–445 (VEAT…SGRT). N-linked (GlcNAc...) asparagine glycosylation occurs at Asn293. One can recognise a J domain in the interval 467–528 (DYYKVLGVKR…ELRKKYDQGD (62 aa)). The disordered stretch occupies residues 522–544 (KKYDQGDDPNDPMGGQQGGYGNP).

In terms of assembly, interacts with the ER chaperone BIP1.

It localises to the endoplasmic reticulum lumen. In terms of biological role, endoplasmic reticulum (ER) protein that functions as a co-chaperone for BIP1 during ER stress. Might be specifically involved in the refolding of N-glycosylated proteins. The polypeptide is Tetratricopeptide repeat and J domain-containing co-chaperone DNJ1 (Mycosarcoma maydis (Corn smut fungus)).